The following is a 214-amino-acid chain: Large ribosomal subunit protein uL2my, C-terminal part (214 aa).

The transit peptide at 1–30 (MSGLVALCRARASASSSLFNSVIRPAFRNF) directs the protein to the mitochondrion. Residues 157–214 (VAMNPCDHPHGGGEGKSKSSGSRGRTSVSPWGKPCKGGYKSASVKKKKKRLAEAAAKM) are disordered. Over residues 163–173 (DHPHGGGEGKS) the composition is skewed to basic and acidic residues. The span at 174 to 185 (KSSGSRGRTSVS) shows a compositional bias: low complexity.

This sequence belongs to the universal ribosomal protein uL2 family. Component of the mitochondrial ribosome large subunit.

It is found in the mitochondrion. The sequence is that of Large ribosomal subunit protein uL2my, C-terminal part from Arabidopsis thaliana (Mouse-ear cress).